The following is a 417-amino-acid chain: Gamma-glutamyl phosphate reductase (417 aa).

This sequence belongs to the gamma-glutamyl phosphate reductase family.

It localises to the cytoplasm. The enzyme catalyses L-glutamate 5-semialdehyde + phosphate + NADP(+) = L-glutamyl 5-phosphate + NADPH + H(+). It participates in amino-acid biosynthesis; L-proline biosynthesis; L-glutamate 5-semialdehyde from L-glutamate: step 2/2. In terms of biological role, catalyzes the NADPH-dependent reduction of L-glutamate 5-phosphate into L-glutamate 5-semialdehyde and phosphate. The product spontaneously undergoes cyclization to form 1-pyrroline-5-carboxylate. This is Gamma-glutamyl phosphate reductase from Idiomarina loihiensis (strain ATCC BAA-735 / DSM 15497 / L2-TR).